Here is a 79-residue protein sequence, read N- to C-terminus: Dolichyl-diphosphooligosaccharide--protein glycosyltransferase subunit TMEM258 (79 aa).

Transmembrane regions (helical) follow at residues 17–37 and 55–75; these read VFPH…AWFF and LISL…LLWV.

This sequence belongs to the OST5 family. As to quaternary structure, component of the oligosaccharyltransferase (OST) complex.

The protein localises to the membrane. It is found in the endoplasmic reticulum. The protein resides in the cytoplasm. Its pathway is protein modification; protein glycosylation. Subunit of the oligosaccharyl transferase (OST) complex that catalyzes the initial transfer of a defined glycan (Glc(3)Man(9)GlcNAc(2) in eukaryotes) from the lipid carrier dolichol-pyrophosphate to an asparagine residue within an Asn-X-Ser/Thr consensus motif in nascent polypeptide chains, the first step in protein N-glycosylation. N-glycosylation occurs cotranslationally and the complex associates with the Sec61 complex at the channel-forming translocon complex that mediates protein translocation across the endoplasmic reticulum (ER). All subunits are required for a maximal enzyme activity. The chain is Dolichyl-diphosphooligosaccharide--protein glycosyltransferase subunit TMEM258 from Gallus gallus (Chicken).